The following is a 20-amino-acid chain: Cytolysin tenebrosin-A (20 aa).

A plays an important role in the hemolytic activity region spans residues 3–12; the sequence is AVAGAVIEGA. Residues 11–20 are N-terminal region; it reads GATLTFEVLQ.

Belongs to the actinoporin family. Sea anemone subfamily. Octamer or nonamer in membranes. Monomer in the soluble state.

The protein localises to the secreted. It is found in the nematocyst. Its subcellular location is the target cell membrane. In terms of biological role, pore-forming protein that forms cations-selective hydrophilic pores of around 1 nm and causes cardiac stimulation and cytolysis. Pore formation is a multi-step process that involves specific recognition of membrane sphingomyelin (but neither cholesterol nor phosphatidylcholine) using aromatic rich region and adjacent phosphocholine (POC) binding site, firm binding to the membrane (mainly driven by hydrophobic interactions) accompanied by the transfer of the N-terminal region to the lipid-water interface and finally pore formation after oligomerization of monomers. This chain is Cytolysin tenebrosin-A, found in Actinia tenebrosa (Australian red waratah sea anemone).